A 654-amino-acid polypeptide reads, in one-letter code: Fructose-1,6-bisphosphatase class 3 (654 aa).

Positions 288–307 (NPAFKPKKRPDKHERLTQRE) are disordered. A compositionally biased stretch (basic and acidic residues) spans 298–307 (DKHERLTQRE).

It belongs to the FBPase class 3 family. It depends on Mn(2+) as a cofactor.

The catalysed reaction is beta-D-fructose 1,6-bisphosphate + H2O = beta-D-fructose 6-phosphate + phosphate. Its pathway is carbohydrate biosynthesis; gluconeogenesis. This chain is Fructose-1,6-bisphosphatase class 3, found in Staphylococcus aureus (strain USA300).